The sequence spans 332 residues: Ornithine carbamoyltransferase, catabolic (332 aa).

Carbamoyl phosphate is bound by residues 60–63 (STRT), Gln-87, Arg-111, and 138–141 (HPTQ). L-ornithine-binding positions include Asn-170, Asp-230, and 234 to 235 (SM). Carbamoyl phosphate is bound by residues 271 to 272 (CL) and Arg-316.

Belongs to the aspartate/ornithine carbamoyltransferase superfamily. OTCase family.

The protein localises to the cytoplasm. It catalyses the reaction carbamoyl phosphate + L-ornithine = L-citrulline + phosphate + H(+). It functions in the pathway amino-acid degradation; L-arginine degradation via ADI pathway; carbamoyl phosphate from L-arginine: step 2/2. In terms of biological role, reversibly catalyzes the transfer of the carbamoyl group from carbamoyl phosphate (CP) to the N(epsilon) atom of ornithine (ORN) to produce L-citrulline. This is Ornithine carbamoyltransferase, catabolic from Bacillus cereus (strain ATCC 10987 / NRS 248).